We begin with the raw amino-acid sequence, 434 residues long: Purple acid phosphatase 22 (434 aa).

The signal sequence occupies residues 1–22 (MKLFGLFLSFTLLFLCPFISQA). An N-linked (GlcNAc...) asparagine glycan is attached at Asn116. The Fe cation site is built by Asp148, Asp175, and Tyr178. Asp175 lines the Zn(2+) pocket. Residues Asn208 and His292 each coordinate Zn(2+). Asn208 serves as a coordination point for substrate. The active-site Proton donor is His302. Position 329 (His329) interacts with Zn(2+). Position 329-331 (329-331 (HVH)) interacts with substrate. His331 is a binding site for Fe cation. The N-linked (GlcNAc...) asparagine glycan is linked to Asn403.

It belongs to the metallophosphoesterase superfamily. Purple acid phosphatase family. Homodimer. The cofactor is Fe cation. It depends on Zn(2+) as a cofactor. Expressed in roots, stems, leaves, flowers and siliques.

The protein localises to the secreted. The catalysed reaction is a phosphate monoester + H2O = an alcohol + phosphate. This is Purple acid phosphatase 22 (PAP22) from Arabidopsis thaliana (Mouse-ear cress).